The following is a 232-amino-acid chain: Transcriptional regulatory protein CpxR (232 aa).

The 113-residue stretch at 3–115 (KILLVDDDRE…ELVARIRAIL (113 aa)) folds into the Response regulatory domain. Asp51 is modified (4-aspartylphosphate). The segment at residues 131-230 (SPTLEVDALV…LRGRGYLMVS (100 aa)) is a DNA-binding region (ompR/PhoB-type).

Post-translationally, phosphorylated by CpxA.

It localises to the cytoplasm. In terms of biological role, member of the two-component regulatory system CpxA/CpxR. This system combats a variety of extracytoplasmic protein-mediated toxicities. It performs this function by increasing the synthesis of the periplasmic protease, DegP as well as that of CpxP protein. The chain is Transcriptional regulatory protein CpxR (cpxR) from Escherichia coli O157:H7.